A 504-amino-acid polypeptide reads, in one-letter code: Glycerol kinase (504 aa).

Threonine 14 is an ADP binding site. The ATP site is built by threonine 14, threonine 15, and serine 16. Threonine 14 contributes to the sn-glycerol 3-phosphate binding site. ADP is bound at residue arginine 18. Residues arginine 84, glutamate 85, and tyrosine 136 each contribute to the sn-glycerol 3-phosphate site. Glycerol-binding residues include arginine 84, glutamate 85, and tyrosine 136. Residue histidine 232 is modified to Phosphohistidine; by HPr. Aspartate 246 is a binding site for sn-glycerol 3-phosphate. Glycerol-binding residues include aspartate 246 and glutamine 247. The ADP site is built by threonine 268 and glycine 311. Residues threonine 268, glycine 311, glutamine 315, and glycine 412 each contribute to the ATP site. Residues glycine 412 and asparagine 416 each contribute to the ADP site.

It belongs to the FGGY kinase family. As to quaternary structure, homotetramer and homodimer (in equilibrium). Post-translationally, the phosphoenolpyruvate-dependent sugar phosphotransferase system (PTS), including enzyme I, and histidine-containing protein (HPr) are required for the phosphorylation, which leads to the activation of the enzyme.

The enzyme catalyses glycerol + ATP = sn-glycerol 3-phosphate + ADP + H(+). It participates in polyol metabolism; glycerol degradation via glycerol kinase pathway; sn-glycerol 3-phosphate from glycerol: step 1/1. Its activity is regulated as follows. Activated by phosphorylation and inhibited by fructose 1,6-bisphosphate (FBP). Its function is as follows. Key enzyme in the regulation of glycerol uptake and metabolism. Catalyzes the phosphorylation of glycerol to yield sn-glycerol 3-phosphate. The protein is Glycerol kinase of Streptococcus pyogenes serotype M6 (strain ATCC BAA-946 / MGAS10394).